The primary structure comprises 586 residues: Probable zinc metalloprotease EGY3, chloroplastic (586 aa).

The transit peptide at 1 to 54 directs the protein to the chloroplast; sequence MASSSLVTSLLFSSSSSSNTATSTSSRRSFSLFSKNQYCKPRPLRRSSSRLLVR. Disordered regions lie at residues 13–32 and 58–122; these read SSSSSSNTATSTSSRRSFSL and QQQQ…DWRS. Basic and acidic residues predominate over residues 61–73; the sequence is QEEKAAPAAESHH. A coiled-coil region spans residues 103 to 195; that stretch reads VKKSKEELEE…NTFKALDLNK (93 aa). 7 helical membrane passes run 287 to 307, 318 to 338, 389 to 409, 427 to 447, 454 to 474, 506 to 526, and 550 to 570; these read LSAVALAVTTFGTIAIMSGFF, VSDVLPLFAGFLSILGVSEIA, ASAYLTSVALAVSAFVSDGSL, PLLSFVQAVIGPYADELGNVL, VGVPVDPLAFAGLLGIVVTSL, VALGAGAIIGGSVLCLAWGLF, and YAWGLVLAVVCLLTLFPNGGG.

Belongs to the peptidase M50B family.

It is found in the plastid. It localises to the chloroplast membrane. Its function is as follows. Probable membrane-associated metalloprotease that may be involved in chloroplast development. This is Probable zinc metalloprotease EGY3, chloroplastic (EGY3) from Oryza sativa subsp. japonica (Rice).